Reading from the N-terminus, the 244-residue chain is SPX domain-containing protein 6 (244 aa).

The region spanning 1–147 (MKFGKLLKRQ…GGALAAPVAE (147 aa)) is the SPX domain. Residues 212–244 (GSSTHGRHSLPPLTLPDSDWLRSFQPPSPIPIQ) are disordered.

This chain is SPX domain-containing protein 6 (SPX6), found in Oryza sativa subsp. indica (Rice).